The following is a 97-amino-acid chain: Large ribosomal subunit protein eL21 (97 aa).

Positions 1 to 12 are enriched in polar residues; the sequence is MPSSNGPRQATR. Positions 1–35 are disordered; sequence MPSSNGPRQATRNKLKNDARERGTSPPQRSIEEYD.

The protein belongs to the eukaryotic ribosomal protein eL21 family.

This chain is Large ribosomal subunit protein eL21, found in Natronomonas pharaonis (strain ATCC 35678 / DSM 2160 / CIP 103997 / JCM 8858 / NBRC 14720 / NCIMB 2260 / Gabara) (Halobacterium pharaonis).